Here is a 485-residue protein sequence, read N- to C-terminus: Glutamyl-tRNA(Gln) amidotransferase subunit A (485 aa).

Active-site charge relay system residues include lysine 79 and serine 154. Residue serine 178 is the Acyl-ester intermediate of the active site.

It belongs to the amidase family. GatA subfamily. Heterotrimer of A, B and C subunits.

It carries out the reaction L-glutamyl-tRNA(Gln) + L-glutamine + ATP + H2O = L-glutaminyl-tRNA(Gln) + L-glutamate + ADP + phosphate + H(+). Functionally, allows the formation of correctly charged Gln-tRNA(Gln) through the transamidation of misacylated Glu-tRNA(Gln) in organisms which lack glutaminyl-tRNA synthetase. The reaction takes place in the presence of glutamine and ATP through an activated gamma-phospho-Glu-tRNA(Gln). The sequence is that of Glutamyl-tRNA(Gln) amidotransferase subunit A from Staphylococcus saprophyticus subsp. saprophyticus (strain ATCC 15305 / DSM 20229 / NCIMB 8711 / NCTC 7292 / S-41).